A 545-amino-acid chain; its full sequence is CTP synthase (545 aa).

The tract at residues Met1–Leu266 is amidoligase domain. A CTP-binding site is contributed by Ser14. Ser14 lines the UTP pocket. ATP contacts are provided by residues Ser15–Ile20 and Asp72. The Mg(2+) site is built by Asp72 and Glu140. Residues Asp147 to Glu149, Lys187 to Gln192, and Lys223 each bind CTP. Residues Lys187 to Gln192 and Lys223 contribute to the UTP site. Position 239–241 (Arg239–Val241) interacts with ATP. In terms of domain architecture, Glutamine amidotransferase type-1 spans Ile291–Gly542. Position 352 (Gly352) interacts with L-glutamine. The active-site Nucleophile; for glutamine hydrolysis is the Cys379. L-glutamine is bound by residues Leu380–Gln383, Glu403, and Arg470. Active-site residues include His515 and Glu517.

Belongs to the CTP synthase family. In terms of assembly, homotetramer.

The catalysed reaction is UTP + L-glutamine + ATP + H2O = CTP + L-glutamate + ADP + phosphate + 2 H(+). It carries out the reaction L-glutamine + H2O = L-glutamate + NH4(+). It catalyses the reaction UTP + NH4(+) + ATP = CTP + ADP + phosphate + 2 H(+). Its pathway is pyrimidine metabolism; CTP biosynthesis via de novo pathway; CTP from UDP: step 2/2. With respect to regulation, allosterically activated by GTP, when glutamine is the substrate; GTP has no effect on the reaction when ammonia is the substrate. The allosteric effector GTP functions by stabilizing the protein conformation that binds the tetrahedral intermediate(s) formed during glutamine hydrolysis. Inhibited by the product CTP, via allosteric rather than competitive inhibition. Its function is as follows. Catalyzes the ATP-dependent amination of UTP to CTP with either L-glutamine or ammonia as the source of nitrogen. Regulates intracellular CTP levels through interactions with the four ribonucleotide triphosphates. The polypeptide is CTP synthase (Psychromonas ingrahamii (strain DSM 17664 / CCUG 51855 / 37)).